The primary structure comprises 365 residues: Protein YIM1 (365 aa).

It belongs to the YIM1 family.

The protein resides in the lipid droplet. Its subcellular location is the mitochondrion. In Saccharomyces cerevisiae (strain RM11-1a) (Baker's yeast), this protein is Protein YIM1 (YIM1).